The sequence spans 232 residues: Ubiquinone biosynthesis O-methyltransferase (232 aa).

Residues arginine 36, glycine 55, aspartate 76, and methionine 120 each coordinate S-adenosyl-L-methionine.

Belongs to the methyltransferase superfamily. UbiG/COQ3 family.

The enzyme catalyses a 3-demethylubiquinol + S-adenosyl-L-methionine = a ubiquinol + S-adenosyl-L-homocysteine + H(+). It catalyses the reaction a 3-(all-trans-polyprenyl)benzene-1,2-diol + S-adenosyl-L-methionine = a 2-methoxy-6-(all-trans-polyprenyl)phenol + S-adenosyl-L-homocysteine + H(+). It functions in the pathway cofactor biosynthesis; ubiquinone biosynthesis. O-methyltransferase that catalyzes the 2 O-methylation steps in the ubiquinone biosynthetic pathway. In Burkholderia mallei (strain ATCC 23344), this protein is Ubiquinone biosynthesis O-methyltransferase.